We begin with the raw amino-acid sequence, 301 residues long: Polyamine aminopropyltransferase (301 aa).

Positions 4 to 240 constitute a PABS domain; that stretch reads WHWLLEWQTP…GLWGFVYGGV (237 aa). Gln-33 provides a ligand contact to S-methyl-5'-thioadenosine. Residues His-64 and Glu-89 each contribute to the spermidine site. S-methyl-5'-thioadenosine-binding positions include Asp-109 and 141–142; that span reads DG. Asp-159 serves as the catalytic Proton acceptor.

This sequence belongs to the spermidine/spermine synthase family. In terms of assembly, homodimer or homotetramer.

The protein localises to the cytoplasm. It catalyses the reaction S-adenosyl 3-(methylsulfanyl)propylamine + putrescine = S-methyl-5'-thioadenosine + spermidine + H(+). The protein operates within amine and polyamine biosynthesis; spermidine biosynthesis; spermidine from putrescine: step 1/1. Its function is as follows. Catalyzes the irreversible transfer of a propylamine group from the amino donor S-adenosylmethioninamine (decarboxy-AdoMet) to putrescine (1,4-diaminobutane) to yield spermidine. In Saccharolobus islandicus (strain L.S.2.15 / Lassen #1) (Sulfolobus islandicus), this protein is Polyamine aminopropyltransferase.